The sequence spans 91 residues: DKRTKKVGIVGKYGVRYGASLRKTIKKIEISQHAKYNCNFCGKDSLKRKAAGIWECKACKKVVAGGAYVCSTTAATTIRAAIRRLRDAHES.

Residues 38-59 form a C4-type zinc finger; it reads CNFCGKDSLKRKAAGIWECKAC.

It belongs to the eukaryotic ribosomal protein eL43 family.

This Schistosoma mansoni (Blood fluke) protein is Large ribosomal subunit protein eL43.